A 38-amino-acid chain; its full sequence is Defensin (38 aa).

3 cysteine pairs are disulfide-bonded: C4–C26, C11–C34, and C15–C36.

The protein belongs to the invertebrate defensin family. Type 2 subfamily.

Its subcellular location is the secreted. Its function is as follows. Mediates the inducible antibacterial activity in larvae of A.cyanea. This Aeshna cyanea (Southern hawker dragonfly) protein is Defensin.